Reading from the N-terminus, the 387-residue chain is Intraflagellar transport protein 57 (387 aa).

Belongs to the IFT57 family.

The protein resides in the cell projection. It localises to the cilium. It is found in the flagellum. Its subcellular location is the cytoplasm. The protein localises to the cytoskeleton. The protein resides in the flagellum axoneme. It localises to the flagellum basal body. Its function is as follows. Component of the intraflagellar transport complex B (IFT-B) involved in flagellar assembly. The sequence is that of Intraflagellar transport protein 57 from Giardia intestinalis (strain ATCC 50803 / WB clone C6) (Giardia lamblia).